The following is a 283-amino-acid chain: Vitamin K epoxide reductase homolog (283 aa).

Topologically, residues 1–20 (MASYLKLKAQEETWLQRHSR) are cytoplasmic. A helical membrane pass occupies residues 21-41 (LILAILAGLGSLLTAYLTYTK). The Periplasmic segment spans residues 42 to 66 (LTEQPAAFCTGDGGCDLVLSSRWAE). Cysteines 50 and 56 form a disulfide. 59 to 65 (VLSSRWA) lines the a quinone pocket. The helical transmembrane segment at 67–87 (FLGIPTAAVGLLGFLGVLALA) threads the bilayer. At 88-102 (VLPDGLPLVKRWRWP) the chain is on the cytoplasmic side. The chain crosses the membrane as a helical span at residues 103–123 (ALFGLVSAMTAFEMYMLYLMV). 111 to 122 (MTAFEMYMLYLM) is an a quinone binding site. The Periplasmic portion of the chain corresponds to 124 to 128 (AVLRQ). Residues 129-149 (FCMYCTTAIILVAGLGLVTVL) form a helical membrane-spanning segment. A disulfide bridge connects residues Cys-130 and Cys-133. Residues 150 to 158 (GHRWLDGGK) are Cytoplasmic-facing. The chain crosses the membrane as a helical span at residues 159–179 (LAFSYILVAFLTLVTTIGVYA). Over 180-283 (NQVPPPSPLA…ASGYPLEEGR (104 aa)) the chain is Periplasmic. The thioredoxin-like domain stretch occupies residues 186–283 (SPLAVGLAAH…ASGYPLEEGR (98 aa)). 2 disulfides stabilise this stretch: Cys-209–Cys-212 and Cys-231–Cys-244.

It belongs to the VKOR family.

The protein resides in the membrane. With respect to regulation, inhibited by ferulenol. In terms of biological role, thiol-disulfide oxidoreductase that catalyzes vitamin K-dependent disulfide bond formation in periplasmic target proteins. This Synechococcus sp. (strain JA-2-3B'a(2-13)) (Cyanobacteria bacterium Yellowstone B-Prime) protein is Vitamin K epoxide reductase homolog.